A 500-amino-acid polypeptide reads, in one-letter code: Chromosomal replication initiator protein DnaA (500 aa).

The interval 1–81 (MVNASGDPVI…LQALRTVTGE (81 aa)) is domain I, interacts with DnaA modulators. Residues 81 to 155 (ENMFPAFKVV…QQKMNRDPET (75 aa)) form a domain II region. The tract at residues 156–377 (HLNKNFTFDS…GALTRVTAVA (222 aa)) is domain III, AAA+ region. 4 residues coordinate ATP: G200, G202, K203, and T204. Positions 378-500 (SLSNQPVTRA…TVRLKQSNTN (123 aa)) are domain IV, binds dsDNA.

The protein belongs to the DnaA family. In terms of assembly, oligomerizes as a right-handed, spiral filament on DNA at oriC.

The protein resides in the cytoplasm. Plays an essential role in the initiation and regulation of chromosomal replication. ATP-DnaA binds to the origin of replication (oriC) to initiate formation of the DNA replication initiation complex once per cell cycle. Binds the DnaA box (a 9 base pair repeat at the origin) and separates the double-stranded (ds)DNA. Forms a right-handed helical filament on oriC DNA; dsDNA binds to the exterior of the filament while single-stranded (ss)DNA is stabiized in the filament's interior. The ATP-DnaA-oriC complex binds and stabilizes one strand of the AT-rich DNA unwinding element (DUE), permitting loading of DNA polymerase. After initiation quickly degrades to an ADP-DnaA complex that is not apt for DNA replication. Binds acidic phospholipids. This chain is Chromosomal replication initiator protein DnaA, found in Bifidobacterium longum subsp. infantis (strain ATCC 15697 / DSM 20088 / JCM 1222 / NCTC 11817 / S12).